Reading from the N-terminus, the 263-residue chain is 3-methyl-2-oxobutanoate hydroxymethyltransferase (263 aa).

Mg(2+) is bound by residues Asp45 and Asp84. 3-methyl-2-oxobutanoate-binding positions include 45 to 46 (DS), Asp84, and Lys112. Glu114 serves as a coordination point for Mg(2+). Residue Glu181 is the Proton acceptor of the active site.

Belongs to the PanB family. In terms of assembly, homodecamer; pentamer of dimers. Mg(2+) is required as a cofactor.

The protein localises to the cytoplasm. The catalysed reaction is 3-methyl-2-oxobutanoate + (6R)-5,10-methylene-5,6,7,8-tetrahydrofolate + H2O = 2-dehydropantoate + (6S)-5,6,7,8-tetrahydrofolate. It functions in the pathway cofactor biosynthesis; (R)-pantothenate biosynthesis; (R)-pantoate from 3-methyl-2-oxobutanoate: step 1/2. Functionally, catalyzes the reversible reaction in which hydroxymethyl group from 5,10-methylenetetrahydrofolate is transferred onto alpha-ketoisovalerate to form ketopantoate. The polypeptide is 3-methyl-2-oxobutanoate hydroxymethyltransferase (Buchnera aphidicola subsp. Acyrthosiphon pisum (strain APS) (Acyrthosiphon pisum symbiotic bacterium)).